We begin with the raw amino-acid sequence, 196 residues long: Large ribosomal subunit protein bL9c (196 aa).

A chloroplast-targeting transit peptide spans 1–41 (MASTTSTLSLSWSNSFHSFAGAISEPQKSPENCRVMLPIVA).

Component of the chloroplast large ribosomal subunit (LSU). Mature 70S chloroplast ribosomes of higher plants consist of a small (30S) and a large (50S) subunit. The 30S small subunit contains 1 molecule of ribosomal RNA (16S rRNA) and 24 different proteins. The 50S large subunit contains 3 rRNA molecules (23S, 5S and 4.5S rRNA) and 33 different proteins.

The protein resides in the plastid. It is found in the chloroplast. Component of the chloroplast ribosome (chloro-ribosome), a dedicated translation machinery responsible for the synthesis of chloroplast genome-encoded proteins, including proteins of the transcription and translation machinery and components of the photosynthetic apparatus. This chain is Large ribosomal subunit protein bL9c (RPL9), found in Spinacia oleracea (Spinach).